The sequence spans 119 residues: Large ribosomal subunit protein bL20 (119 aa).

It belongs to the bacterial ribosomal protein bL20 family.

In terms of biological role, binds directly to 23S ribosomal RNA and is necessary for the in vitro assembly process of the 50S ribosomal subunit. It is not involved in the protein synthesizing functions of that subunit. This chain is Large ribosomal subunit protein bL20, found in Treponema denticola (strain ATCC 35405 / DSM 14222 / CIP 103919 / JCM 8153 / KCTC 15104).